The following is a 273-amino-acid chain: Dermonecrotic toxin LapSicTox-alphaIB1aii (273 aa).

Residue His5 is part of the active site. Positions 25 and 27 each coordinate Mg(2+). Residue His41 is the Nucleophile of the active site. Cystine bridges form between Cys45–Cys51 and Cys47–Cys190. Asp85 contributes to the Mg(2+) binding site. N-linked (GlcNAc...) asparagine glycosylation occurs at Asn250.

Belongs to the arthropod phospholipase D family. Class II subfamily. It depends on Mg(2+) as a cofactor. As to expression, expressed by the venom gland.

It localises to the secreted. The enzyme catalyses an N-(acyl)-sphingosylphosphocholine = an N-(acyl)-sphingosyl-1,3-cyclic phosphate + choline. It catalyses the reaction an N-(acyl)-sphingosylphosphoethanolamine = an N-(acyl)-sphingosyl-1,3-cyclic phosphate + ethanolamine. The catalysed reaction is a 1-acyl-sn-glycero-3-phosphocholine = a 1-acyl-sn-glycero-2,3-cyclic phosphate + choline. It carries out the reaction a 1-acyl-sn-glycero-3-phosphoethanolamine = a 1-acyl-sn-glycero-2,3-cyclic phosphate + ethanolamine. Its function is as follows. Dermonecrotic toxins cleave the phosphodiester linkage between the phosphate and headgroup of certain phospholipids (sphingolipid and lysolipid substrates), forming an alcohol (often choline) and a cyclic phosphate. This toxin acts on sphingomyelin (SM). It may also act on ceramide phosphoethanolamine (CPE), lysophosphatidylcholine (LPC) and lysophosphatidylethanolamine (LPE), but not on lysophosphatidylserine (LPS), and lysophosphatidylglycerol (LPG). It acts by transphosphatidylation, releasing exclusively cyclic phosphate products as second products. Induces dermonecrosis, hemolysis, increased vascular permeability, edema, inflammatory response, and platelet aggregation. The polypeptide is Dermonecrotic toxin LapSicTox-alphaIB1aii (Loxosceles apachea (Apache recluse spider)).